A 454-amino-acid chain; its full sequence is Bifunctional protein GlmU (454 aa).

The interval 1–240 (MNVSVVILAA…EEEFMGVNSK (240 aa)) is pyrophosphorylase. Residues 8–11 (LAAG), Lys22, and 87–88 (GT) contribute to the UDP-N-acetyl-alpha-D-glucosamine site. Residue Asp119 participates in Mg(2+) binding. Residues Gly152, Glu166, Asn181, and Asn238 each coordinate UDP-N-acetyl-alpha-D-glucosamine. Mg(2+) is bound at residue Asn238. Residues 241–261 (IQLACAQEIMLQRLREKAMEQ) are linker. An N-acetyltransferase region spans residues 262 to 454 (GVIMNLPHTI…SDKNEEKKEQ (193 aa)). Residues Arg325 and Lys342 each contribute to the UDP-N-acetyl-alpha-D-glucosamine site. His353 serves as the catalytic Proton acceptor. UDP-N-acetyl-alpha-D-glucosamine is bound by residues Tyr356 and Asn367. Acetyl-CoA contacts are provided by residues Ala370, 376-377 (NY), Ser395, Ala413, and Arg430.

The protein in the N-terminal section; belongs to the N-acetylglucosamine-1-phosphate uridyltransferase family. This sequence in the C-terminal section; belongs to the transferase hexapeptide repeat family. In terms of assembly, homotrimer. Mg(2+) serves as cofactor.

It localises to the cytoplasm. It catalyses the reaction alpha-D-glucosamine 1-phosphate + acetyl-CoA = N-acetyl-alpha-D-glucosamine 1-phosphate + CoA + H(+). The catalysed reaction is N-acetyl-alpha-D-glucosamine 1-phosphate + UTP + H(+) = UDP-N-acetyl-alpha-D-glucosamine + diphosphate. It participates in nucleotide-sugar biosynthesis; UDP-N-acetyl-alpha-D-glucosamine biosynthesis; N-acetyl-alpha-D-glucosamine 1-phosphate from alpha-D-glucosamine 6-phosphate (route II): step 2/2. Its pathway is nucleotide-sugar biosynthesis; UDP-N-acetyl-alpha-D-glucosamine biosynthesis; UDP-N-acetyl-alpha-D-glucosamine from N-acetyl-alpha-D-glucosamine 1-phosphate: step 1/1. It functions in the pathway bacterial outer membrane biogenesis; LPS lipid A biosynthesis. In terms of biological role, catalyzes the last two sequential reactions in the de novo biosynthetic pathway for UDP-N-acetylglucosamine (UDP-GlcNAc). The C-terminal domain catalyzes the transfer of acetyl group from acetyl coenzyme A to glucosamine-1-phosphate (GlcN-1-P) to produce N-acetylglucosamine-1-phosphate (GlcNAc-1-P), which is converted into UDP-GlcNAc by the transfer of uridine 5-monophosphate (from uridine 5-triphosphate), a reaction catalyzed by the N-terminal domain. The protein is Bifunctional protein GlmU of Helicobacter hepaticus (strain ATCC 51449 / 3B1).